Consider the following 210-residue polypeptide: Thiamine-phosphate synthase (210 aa).

Residues 39–43 (QLREK) and N71 each bind 4-amino-2-methyl-5-(diphosphooxymethyl)pyrimidine. Positions 72 and 91 each coordinate Mg(2+). S110 provides a ligand contact to 4-amino-2-methyl-5-(diphosphooxymethyl)pyrimidine. 134 to 136 (TPT) serves as a coordination point for 2-[(2R,5Z)-2-carboxy-4-methylthiazol-5(2H)-ylidene]ethyl phosphate. K137 contributes to the 4-amino-2-methyl-5-(diphosphooxymethyl)pyrimidine binding site. G163 lines the 2-[(2R,5Z)-2-carboxy-4-methylthiazol-5(2H)-ylidene]ethyl phosphate pocket.

Belongs to the thiamine-phosphate synthase family. Mg(2+) serves as cofactor.

It catalyses the reaction 2-[(2R,5Z)-2-carboxy-4-methylthiazol-5(2H)-ylidene]ethyl phosphate + 4-amino-2-methyl-5-(diphosphooxymethyl)pyrimidine + 2 H(+) = thiamine phosphate + CO2 + diphosphate. It carries out the reaction 2-(2-carboxy-4-methylthiazol-5-yl)ethyl phosphate + 4-amino-2-methyl-5-(diphosphooxymethyl)pyrimidine + 2 H(+) = thiamine phosphate + CO2 + diphosphate. The catalysed reaction is 4-methyl-5-(2-phosphooxyethyl)-thiazole + 4-amino-2-methyl-5-(diphosphooxymethyl)pyrimidine + H(+) = thiamine phosphate + diphosphate. It functions in the pathway cofactor biosynthesis; thiamine diphosphate biosynthesis; thiamine phosphate from 4-amino-2-methyl-5-diphosphomethylpyrimidine and 4-methyl-5-(2-phosphoethyl)-thiazole: step 1/1. Its function is as follows. Condenses 4-methyl-5-(beta-hydroxyethyl)thiazole monophosphate (THZ-P) and 2-methyl-4-amino-5-hydroxymethyl pyrimidine pyrophosphate (HMP-PP) to form thiamine monophosphate (TMP). The sequence is that of Thiamine-phosphate synthase from Campylobacter jejuni subsp. jejuni serotype O:6 (strain 81116 / NCTC 11828).